Reading from the N-terminus, the 105-residue chain is Large ribosomal subunit protein eL36 (105 aa).

A disordered region spans residues 1–20 (MAKEAPAKTGLAVGLNKGHK).

The protein belongs to the eukaryotic ribosomal protein eL36 family.

In Trichoderma hamatum, this protein is Large ribosomal subunit protein eL36 (rpl36).